The chain runs to 835 residues: Transcription intermediary factor 1-beta (835 aa).

Residues 1 to 19 (MAASAAAASAAAASAASGS) are compositionally biased toward low complexity. The tract at residues 1–49 (MAASAAAASAAAASAASGSPGPGEGSAGGEKRSTAPSAAASASASAAAS) is disordered. Ala2 bears the N-acetylalanine mark. 2 positions are modified to phosphoserine: Ser19 and Ser26. Residue Lys31 forms a Glycyl lysine isopeptide (Lys-Gly) (interchain with G-Cter in SUMO2) linkage. Over residues 35 to 49 (APSAAASASASAAAS) the composition is skewed to low complexity. Phosphoserine is present on Ser50. The RING-type zinc finger occupies 65-121 (CGVCRERLRPEREPRLLPCLHSACSACLGPAAPAAANSSGDGGAAGDGTVVDCPVCK). Positions 65–376 (CGVCRERLRP…LIYFQLHRAL (312 aa)) are RBCC domain. A Glycyl lysine isopeptide (Lys-Gly) (interchain with G-Cter in SUMO2) cross-link involves residue Lys127. Ser138 is subject to Phosphoserine. Residues 148 to 195 (DANQCCTSCEDNAPATSYCVECSEPLCETCVEAHQRVKYTKDHTVRST) form a B box-type 1; atypical zinc finger. Residues Cys153, Cys156, Cys177, and His181 each coordinate Zn(2+). Lys199 participates in a covalent cross-link: Glycyl lysine isopeptide (Lys-Gly) (interchain with G-Cter in SUMO2). A B box-type 2 zinc finger spans residues 204-245 (ERTVYCNVHKHEPLVLFCESCDTLTCRDCQLNAHKDHQYQFL). Cys209, His212, Cys232, and His237 together coordinate Zn(2+). Residues 246–376 (EDAVRNQRKL…LIYFQLHRAL (131 aa)) are leucine zipper alpha helical coiled-coil region. The interaction with MAGEC2 stretch occupies residues 247–376 (DAVRNQRKLL…LIYFQLHRAL (130 aa)). Glycyl lysine isopeptide (Lys-Gly) (interchain with G-Cter in SUMO2) cross-links involve residues Lys254 and Lys261. Lys266 carries the N6-acetyllysine modification. Residue Lys272 forms a Glycyl lysine isopeptide (Lys-Gly) (interchain with G-Cter in SUMO2) linkage. At Lys304 the chain carries N6-acetyllysine; alternate. A Glycyl lysine isopeptide (Lys-Gly) (interchain with G-Cter in SUMO2); alternate cross-link involves residue Lys304. Lys319 is covalently cross-linked (Glycyl lysine isopeptide (Lys-Gly) (interchain with G-Cter in SUMO2)). Lys340 is modified (N6-acetyllysine). A Glycyl lysine isopeptide (Lys-Gly) (interchain with G-Cter in SUMO2) cross-link involves residue Lys366. The tract at residues 366 to 370 (KLIYF) is involved in binding PPP1CA. An N6-acetyllysine; alternate modification is found at Lys377. Lys377 is covalently cross-linked (Glycyl lysine isopeptide (Lys-Gly) (interchain with G-Cter in SUMO2); alternate). Residue Lys377 forms a Glycyl lysine isopeptide (Lys-Gly) (interchain with G-Cter in SUMO1); alternate linkage. Residue Lys407 forms a Glycyl lysine isopeptide (Lys-Gly) (interchain with G-Cter in SUMO2) linkage. The segment at 411–480 (ERPGTNSTGP…SRSGEGEVSG (70 aa)) is disordered. Ser417 bears the Phosphoserine mark. Residue Lys434 forms a Glycyl lysine isopeptide (Lys-Gly) (interchain with G-Cter in SUMO2) linkage. A compositionally biased stretch (polar residues) spans 434 to 443 (KQGSGSSQPM). A phosphoserine mark is found at Ser437, Ser439, and Ser453. A Glycyl lysine isopeptide (Lys-Gly) (interchain with G-Cter in SUMO2); alternate cross-link involves residue Lys469. Lys469 participates in a covalent cross-link: Glycyl lysine isopeptide (Lys-Gly) (interchain with G-Cter in SUMO1); alternate. Arg470 is modified (citrulline). Ser471 is modified (phosphoserine). Citrulline is present on Arg472. A phosphoserine mark is found at Ser473, Ser479, and Ser489. An HP1 box region spans residues 476–513 (GEVSGLMRKVPRVSLERLDLDLTADSQPPVFKVFPGST). Residues 481-494 (LMRKVPRVSLERLD) carry the PxVxL motif motif. Residue Thr498 is modified to Phosphothreonine. Ser501 bears the Phosphoserine mark. Lys507 is covalently cross-linked (Glycyl lysine isopeptide (Lys-Gly) (interchain with G-Cter in SUMO2)). Position 541 is a phosphothreonine (Thr541). Residue Lys554 forms a Glycyl lysine isopeptide (Lys-Gly) (interchain with G-Cter in SUMO2); alternate linkage. Lys554 participates in a covalent cross-link: Glycyl lysine isopeptide (Lys-Gly) (interchain with G-Cter in SUMO); alternate. Lys575 is covalently cross-linked (Glycyl lysine isopeptide (Lys-Gly) (interchain with G-Cter in SUMO2)). The tract at residues 584–618 (GPGAEGPRLASPSGSTSSGLEVVAPEGTSAPGGGP) is disordered. Ser594 is modified (phosphoserine). A PHD-type zinc finger spans residues 625 to 672 (ATICRVCQKPGDLVMCNQCEFCFHLDCHLPALQDVPGEEWSCSLCHVL). Residue Lys676 forms a Glycyl lysine isopeptide (Lys-Gly) (interchain with G-Cter in SUMO) linkage. Phosphoserine occurs at positions 683, 689, and 697. The 105-residue stretch at 695–799 (KLSPANQRKC…RFFETRMNEA (105 aa)) folds into the Bromo domain. Residue Lys750 forms a Glycyl lysine isopeptide (Lys-Gly) (interchain with G-Cter in SUMO2); alternate linkage. Residue Lys750 forms a Glycyl lysine isopeptide (Lys-Gly) (interchain with G-Cter in SUMO1); alternate linkage. Lys750 participates in a covalent cross-link: Glycyl lysine isopeptide (Lys-Gly) (interchain with G-Cter in SUMO); alternate. Phosphoserine is present on Ser752. Position 755 is a phosphotyrosine (Tyr755). Ser757 carries the post-translational modification Phosphoserine. 3 positions are modified to N6-acetyllysine; alternate: Lys770, Lys774, and Lys779. Residues Lys770, Lys774, and Lys779 each participate in a glycyl lysine isopeptide (Lys-Gly) (interchain with G-Cter in SUMO2); alternate cross-link. Residue Lys779 forms a Glycyl lysine isopeptide (Lys-Gly) (interchain with G-Cter in SUMO1); alternate linkage. The residue at position 784 (Ser784) is a Phosphoserine. Residue Lys804 forms a Glycyl lysine isopeptide (Lys-Gly) (interchain with G-Cter in SUMO2); alternate linkage. Lys804 participates in a covalent cross-link: Glycyl lysine isopeptide (Lys-Gly) (interchain with G-Cter in SUMO); alternate. The interval 815 to 835 (MSLPGAGLSSQELSGGPGDGP) is disordered. Phosphoserine; by ATM and ATR and dsDNA kinase is present on Ser824.

It belongs to the TRIM/RBCC family. In terms of assembly, interacts with SETX. Oligomer; the RBCC domain homotrimerizes and interacts with one molecule of KRAB to form the KRAB-KAP1 corepressor complex. Binding to a KRAB domain is an absolute requirement for silencing gene expression. Interacts with CEBPB and NR3C1. Interacts with a number of KRAB-ZFP proteins including ZNF10, ZFP53, ZFP68, ZNF382 and ZNF256. Interacts with NCOR1, NR3C1 and CHD3. Interacts with CEBPB (via the RING-type and PHD-type zinc fingers). Component of a ternary complex that includes TRIM28, a HP1 protein (CBX1, CBX3 OR CBX5), a KRAB domain-containing protein, and DNA. Interacts with CBX5 (via the PxVxL motif); the interaction occurs in interphase nuclei and competes for binding POGZ. Interacts with POGZ; the interaction competes for interaction with CBX5. Interacts with SETDB1; the interaction is enhanced by KAP1 sumoylation, stimulates SETDB1 histone methyltransferase activity and gene silencing. Interacts (via the PHD-type zinc finger) with UBE2I; the interaction is required for sumoylation and repressor activity. Component of the TRIM28/KAP1-ERBB4-MDM2 complex involved in connecting growth factor and DNA damage responses. Interacts directly with ERBB4; the interaction represses ERBB4-mediated transcription activity. Interacts with MDM2; the interaction contributes to p53/TP53 inactivation. Component of the TRIM28/KAP1-MDM2-p53/TP53; involved in regulating p53/TP53 stabilization and activity. Interacts (via the leucine zipper alpha helical coiled-coil) with E2F1 (central region); the interaction inhibits E2F1 acetylation and transcriptional activity. Interacts with PPP1CA; the interaction dephosphorylates TRIM28 at Ser-824 and forms a complex at the p21 promoter site. Interacts with PPP1CB; the interaction is weak but is increased on dephosphorylation at Ser-824. Interacts with FES/FPS. Interacts with SMARCAD1. Interacts with, and sumoylates IRF7. Interacts with MAGEC2. Part of a complex composed of TRIM28, HDAC1, HDAC2 and EHMT2. Interacts with AICDA. Interacts (via the RBCC domain) with KOX1 (via the KRAB domain), ZNF268 (via the KRAB domain) and ZNF300 (via the KRAB domain); the interactions increase KOX1, ZNF268 and ZNF300 nuclear localization activities. The large PER complex involved in the histone methylation is composed of at least PER2, CBX3, TRIM28, SUV39H1 and/or SUV39H2; CBX3 mediates the formation of the complex. Interacts with isoform 2 of ZFP90. Forms a complex with FOXP3 in the presence of isoform 2 of ZFP90. Interacts with NR4A3; the interactions potentiates NR4A3 activity on NurRE promoter. Interacts (unphosphorylated or phosphorylated form) with ZBTB1 (via BTB domain). Probably part of a corepressor complex containing ZNF304, TRIM28, SETDB1 and DNMT1. Interacts with ATRX. Forms a complex with ATRX, SETDB1 and ZNF274. Interacts with ZFP568; the interaction mediates ZFP568 transcriptional repression activity. Interacts with RRP1B. Interacts with CRY1. Interacts with ZNF263; recruited to the SIX3 promoter along with other proteins involved in chromatin modification and transcriptional corepression where it contributes to transcriptional repression. Interacts with CYREN (via XLF motif). Interacts with TRIM17; this interaction prevents TRIM28 activity. Interacts with ZNF746. Interacts with PHF13. Interacts with ZNF354C. Interacts with ZNF432; the interaction is independent of PARP1. (Microbial infection) Interacts with herpes virus 8 protein LANA1; this interaction facilitates establishment of viral latency. Post-translationally, ATM-induced phosphorylation on Ser-824 represses sumoylation leading to the de-repression of expression of a subset of genes involved in cell cycle control and apoptosis in response to genotoxic stress. Dephosphorylation by the phosphatases, PPP1CA and PP1CB forms, allows sumoylation and expression of TRIM28 target genes. Sumoylation/desumoylation events regulate TRIM28-mediated transcriptional repression. Sumoylation is required for interaction with CHD3 and SETDB1 and the corepressor activity. Represses and is repressed by Ser-824 phosphorylation. Enhances the TRIM28 corepressor activity, inhibiting transcriptional activity of a number of genes including GADD45A and CDKN1A/p21. Lys-554, Lys-779 and Lys-804 are the major sites of sumoylation. In response to Dox-induced DNA damage, enhanced phosphorylation on Ser-824 prevents sumoylation and allows de-repression of CDKN1A/p21. In terms of processing, auto-ubiquitinated; enhanced by MAGEA2 and MAGEC2. Post-translationally, citrullinated by PADI4. ADP-ribosylated by SIRT6, promoting TRIM28/KAP1 interaction with CBX5, thereby contributing to the packaging of LINE-1 retrotransposon elements into transcriptionally repressive heterochromatin. Expressed in all tissues tested including spleen, thymus, prostate, testis, ovary, small intestine, colon and peripheral blood leukocytes.

The protein resides in the nucleus. It carries out the reaction S-ubiquitinyl-[E2 ubiquitin-conjugating enzyme]-L-cysteine + [acceptor protein]-L-lysine = [E2 ubiquitin-conjugating enzyme]-L-cysteine + N(6)-ubiquitinyl-[acceptor protein]-L-lysine.. The protein operates within protein modification; protein sumoylation. In terms of biological role, nuclear corepressor for KRAB domain-containing zinc finger proteins (KRAB-ZFPs). Mediates gene silencing by recruiting CHD3, a subunit of the nucleosome remodeling and deacetylation (NuRD) complex, and SETDB1 (which specifically methylates histone H3 at 'Lys-9' (H3K9me)) to the promoter regions of KRAB target genes. Enhances transcriptional repression by coordinating the increase in H3K9me, the decrease in histone H3 'Lys-9 and 'Lys-14' acetylation (H3K9ac and H3K14ac, respectively) and the disposition of HP1 proteins to silence gene expression. Recruitment of SETDB1 induces heterochromatinization. May play a role as a coactivator for CEBPB and NR3C1 in the transcriptional activation of ORM1. Also a corepressor for ERBB4. Inhibits E2F1 activity by stimulating E2F1-HDAC1 complex formation and inhibiting E2F1 acetylation. May serve as a partial backup to prevent E2F1-mediated apoptosis in the absence of RB1. Important regulator of CDKN1A/p21(CIP1). Has E3 SUMO-protein ligase activity toward itself via its PHD-type zinc finger. Also specifically sumoylates IRF7, thereby inhibiting its transactivation activity. Ubiquitinates p53/TP53 leading to its proteasomal degradation; the function is enhanced by MAGEC2 and MAGEA2, and possibly MAGEA3 and MAGEA6. Mediates the nuclear localization of KOX1, ZNF268 and ZNF300 transcription factors. In association with isoform 2 of ZFP90, is required for the transcriptional repressor activity of FOXP3 and the suppressive function of regulatory T-cells (Treg). Probably forms a corepressor complex required for activated KRAS-mediated promoter hypermethylation and transcriptional silencing of tumor suppressor genes (TSGs) or other tumor-related genes in colorectal cancer (CRC) cells. Required to maintain a transcriptionally repressive state of genes in undifferentiated embryonic stem cells (ESCs). In ESCs, in collaboration with SETDB1, is also required for H3K9me3 and silencing of endogenous and introduced retroviruses in a DNA-methylation independent-pathway. Associates at promoter regions of tumor suppressor genes (TSGs) leading to their gene silencing. The SETDB1-TRIM28-ZNF274 complex may play a role in recruiting ATRX to the 3'-exons of zinc-finger coding genes with atypical chromatin signatures to establish or maintain/protect H3K9me3 at these transcriptionally active regions. Functionally, (Microbial infection) Plays a critical role in the shutdown of lytic gene expression during the early stage of herpes virus 8 primary infection. This inhibition is mediated through interaction with herpes virus 8 protein LANA1. This Homo sapiens (Human) protein is Transcription intermediary factor 1-beta.